The chain runs to 27 residues: Conotoxin Bt9.2 (27 aa).

Cystine bridges form between Cys2–Cys16, Cys6–Cys19, and Cys12–Cys24. Residue Pro13 is modified to 4-hydroxyproline.

As to expression, expressed by the venom duct.

The protein localises to the secreted. Probable neurotoxin that inhibits ion channels. This chain is Conotoxin Bt9.2, found in Conus betulinus (Beech cone).